Reading from the N-terminus, the 641-residue chain is Sodium-dependent nutrient amino acid transporter 1 (641 aa).

The disordered stretch occupies residues 1 to 38 (MELKGVQPSNGSSNGSGNGATNAASTEKTDAEKPTAER). Residues 1–40 (MELKGVQPSNGSSNGSGNGATNAASTEKTDAEKPTAERTN) lie on the Cytoplasmic side of the membrane. Positions 9-26 (SNGSSNGSGNGATNAAST) are enriched in low complexity. Residues 27–36 (EKTDAEKPTA) show a composition bias toward basic and acidic residues. The next 3 helical transmembrane spans lie at 41–61 (WGNG…LGNV), 74–94 (GAFL…MYYL), and 111–131 (SVVP…ICII). N-linked (GlcNAc...) asparagine glycans are attached at residues asparagine 185 and asparagine 190. 9 consecutive transmembrane segments (helical) span residues 229–249 (PDWK…LVIM), 258–278 (AAYF…IRAV), 307–327 (AVVQ…MFAS), 341–361 (IVTT…FAIL), 401–421 (LFSV…IVAL), 447–467 (VCGF…ILTL), 474–494 (TYVV…VYGL), 516–536 (CWSF…MVTI), and 552–572 (IAGW…GLWY).

This sequence belongs to the sodium:neurotransmitter symporter (SNF) (TC 2.A.22) family. In larvae, weak specific expression in the anterior midgut just proximal to the gastric caeca reproductive rudiments, common ureters of the Malpighian tubules, and distal swollen portion of the anterior pair of Malpighian tubules. Expression is also seen in the imaginal disks of the head; brain hemispheres and the ventral ganglion. Stronger expression in the posterior midgut.

It is found in the membrane. Unusual broad substrate spectrum amino acid:sodium cotransporter that promotes absorption of the D isomers of essential amino acids. Neutral amino acids are the preferred substrates, especially methionine and phenylalanine. The sequence is that of Sodium-dependent nutrient amino acid transporter 1 (NAAT1) from Drosophila melanogaster (Fruit fly).